Consider the following 1114-residue polypeptide: Mediator of RNA polymerase II transcription subunit 14 (1114 aa).

3 disordered regions span residues 1–27 (MPGV…QDGL), 40–79 (ANAQ…GPPE), and 120–141 (HGIH…SPGN). Over residues 126–140 (TAPTTGKSPGNQSPG) the composition is skewed to polar residues.

This sequence belongs to the Mediator complex subunit 14 family. As to quaternary structure, component of the Mediator complex.

It is found in the nucleus. In terms of biological role, component of the Mediator complex, a coactivator involved in the regulated transcription of nearly all RNA polymerase II-dependent genes. Mediator functions as a bridge to convey information from gene-specific regulatory proteins to the basal RNA polymerase II transcription machinery. Mediator is recruited to promoters by direct interactions with regulatory proteins and serves as a scaffold for the assembly of a functional preinitiation complex with RNA polymerase II and the general transcription factors. The polypeptide is Mediator of RNA polymerase II transcription subunit 14 (rgr1) (Aspergillus niger (strain ATCC MYA-4892 / CBS 513.88 / FGSC A1513)).